A 222-amino-acid polypeptide reads, in one-letter code: Sortase A (222 aa).

At 1–7 (MLKKTIA) the chain is on the cytoplasmic side. A helical transmembrane segment spans residues 8–28 (IIILIIGLLLIFSPFIKNGIV). Residues 29–222 (KYMSGHETIE…ELENKYFPSK (194 aa)) are Extracellular-facing. Histidine 127 functions as the Proton donor/acceptor in the catalytic mechanism. Catalysis depends on cysteine 188, which acts as the Acyl-thioester intermediate.

Belongs to the bacterial sortase family. Class A subfamily.

It is found in the cell membrane. Its activity is regulated as follows. Activity is enhanced by Zn(2+) and strongly enhanced by Ca(2+). Inhibited by chalcone, a precursor of several flavonoids, which blocks the SrtA active site. Transpeptidase that anchors surface proteins to the cell wall. Recognizes and modifies its substrate by proteolytic cleavage of a C-terminal sorting signal. Following cleavage, a covalent intermediate is formed via a thioester bond between the sortase and its substrate, which is then transferred and covalently attached to the cell wall. This sortase recognizes a Leu-Pro-x-Thr-Gly (LPXTG) motif, which is cleaved by the sortase between the threonine and glycine residues. Involved in pathogenesis. May regulate the rate of synthesis and/or the stability of a subset of LPXTG proteins. Not involved in cell wall-anchoring of Hbp2 (SvpA) or Hbp1. The sequence is that of Sortase A from Listeria monocytogenes serovar 1/2a (strain ATCC BAA-679 / EGD-e).